Consider the following 305-residue polypeptide: UDP-3-O-acyl-N-acetylglucosamine deacetylase (305 aa).

The Zn(2+) site is built by H79, H238, and D242. The active-site Proton donor is the H265.

It belongs to the LpxC family. It depends on Zn(2+) as a cofactor.

The enzyme catalyses a UDP-3-O-[(3R)-3-hydroxyacyl]-N-acetyl-alpha-D-glucosamine + H2O = a UDP-3-O-[(3R)-3-hydroxyacyl]-alpha-D-glucosamine + acetate. The protein operates within glycolipid biosynthesis; lipid IV(A) biosynthesis; lipid IV(A) from (3R)-3-hydroxytetradecanoyl-[acyl-carrier-protein] and UDP-N-acetyl-alpha-D-glucosamine: step 2/6. Functionally, catalyzes the hydrolysis of UDP-3-O-myristoyl-N-acetylglucosamine to form UDP-3-O-myristoylglucosamine and acetate, the committed step in lipid A biosynthesis. This chain is UDP-3-O-acyl-N-acetylglucosamine deacetylase, found in Aliivibrio fischeri (strain ATCC 700601 / ES114) (Vibrio fischeri).